We begin with the raw amino-acid sequence, 671 residues long: DNA ligase (671 aa).

Residues 32–36 (DAEYD), 81–82 (SL), and glutamate 113 contribute to the NAD(+) site. Lysine 115 serves as the catalytic N6-AMP-lysine intermediate. NAD(+)-binding residues include arginine 136, glutamate 173, lysine 290, and lysine 314. Residues cysteine 408, cysteine 411, cysteine 426, and cysteine 432 each coordinate Zn(2+). The BRCT domain occupies 593–671 (EIDSPFAGKT…ETEMLRLLGS (79 aa)).

This sequence belongs to the NAD-dependent DNA ligase family. LigA subfamily. Mg(2+) is required as a cofactor. Requires Mn(2+) as cofactor.

It carries out the reaction NAD(+) + (deoxyribonucleotide)n-3'-hydroxyl + 5'-phospho-(deoxyribonucleotide)m = (deoxyribonucleotide)n+m + AMP + beta-nicotinamide D-nucleotide.. DNA ligase that catalyzes the formation of phosphodiester linkages between 5'-phosphoryl and 3'-hydroxyl groups in double-stranded DNA using NAD as a coenzyme and as the energy source for the reaction. It is essential for DNA replication and repair of damaged DNA. In Escherichia fergusonii (strain ATCC 35469 / DSM 13698 / CCUG 18766 / IAM 14443 / JCM 21226 / LMG 7866 / NBRC 102419 / NCTC 12128 / CDC 0568-73), this protein is DNA ligase.